The chain runs to 495 residues: ATP synthase subunit beta, chloroplastic (495 aa).

An ATP-binding site is contributed by 172-179; sequence GGAGVGKT.

Belongs to the ATPase alpha/beta chains family. As to quaternary structure, F-type ATPases have 2 components, CF(1) - the catalytic core - and CF(0) - the membrane proton channel. CF(1) has five subunits: alpha(3), beta(3), gamma(1), delta(1), epsilon(1). CF(0) has four main subunits: a(1), b(1), b'(1) and c(9-12).

The protein localises to the plastid. Its subcellular location is the chloroplast thylakoid membrane. It carries out the reaction ATP + H2O + 4 H(+)(in) = ADP + phosphate + 5 H(+)(out). In terms of biological role, produces ATP from ADP in the presence of a proton gradient across the membrane. The catalytic sites are hosted primarily by the beta subunits. This chain is ATP synthase subunit beta, chloroplastic, found in Beaucarnea recurvata (Elephant-foot tree).